The chain runs to 146 residues: Hemoglobin subunit beta (146 aa).

The Globin domain occupies 2–146; that stretch reads HWSAEEKQLI…VAHALARKYH (145 aa). Positions 63 and 92 each coordinate heme b.

It belongs to the globin family. Heterotetramer of two alpha chains and two beta chains. In terms of tissue distribution, red blood cells.

In terms of biological role, involved in oxygen transport from the lung to the various peripheral tissues. The sequence is that of Hemoglobin subunit beta (HBB) from Phasianus colchicus colchicus (Black-necked pheasant).